The primary structure comprises 521 residues: MTKAVQIKNRPTGLIILDGWGHREATQHNAIAQAHTPNWDNLLKDYHHTLINTSGLAVGLPEGQMGNSEVGHMNLGAGRVVYQELTRIQKDIDDGRFFENNALVKAIDAASNRDHKVHILGLLSDGGVHSHISHIKASIKMAHDRGAKVYVHIFTDGRDTAPQSALQYIEELETFMKELGGGRIASVTGRYFALDRDNRWERVKKAYDAIACGSAEFEAKDAKEAVELAYARGENDEFIQATVIPRNNGKPARVKDGDSVIFMNFRSDRARQLTEAFIMDDFADFHRCKTPVLSAFVTLTEYKKNFEKFGALVAYRPTSLRNTFGEYVSKKGLKQLRIAETEKYAHVTFFFNGGVEEPNDNEVRILINSPQVATYDLQPEMSLPELKEKLIDAIKSGEYDTFICNIANPDMVGHTGDFNACVQAAEAVDEALGEILATIKAVDGEAIVTADHGNMEMLFNEETGKPLTSHTTFPVPFVYFGKKGYPLKDGGALCDVIPTLLDMMGIEKPEEMTGTSLIDKA.

Residues aspartate 18 and serine 68 each contribute to the Mn(2+) site. Serine 68 functions as the Phosphoserine intermediate in the catalytic mechanism. Residues histidine 129, 158-159, arginine 190, arginine 196, 266-269, and lysine 343 contribute to the substrate site; these read RD and RSDR. Residues aspartate 410, histidine 414, aspartate 451, histidine 452, and histidine 470 each coordinate Mn(2+).

This sequence belongs to the BPG-independent phosphoglycerate mutase family. Monomer. The cofactor is Mn(2+).

The enzyme catalyses (2R)-2-phosphoglycerate = (2R)-3-phosphoglycerate. The protein operates within carbohydrate degradation; glycolysis; pyruvate from D-glyceraldehyde 3-phosphate: step 3/5. Catalyzes the interconversion of 2-phosphoglycerate and 3-phosphoglycerate. This chain is 2,3-bisphosphoglycerate-independent phosphoglycerate mutase, found in Hydrogenovibrio crunogenus (strain DSM 25203 / XCL-2) (Thiomicrospira crunogena).